Reading from the N-terminus, the 317-residue chain is Acetyl-coenzyme A carboxylase carboxyl transferase subunit alpha (317 aa).

Positions Arg-39 to Gly-293 constitute a CoA carboxyltransferase C-terminal domain.

It belongs to the AccA family. Acetyl-CoA carboxylase is a heterohexamer composed of biotin carboxyl carrier protein (AccB), biotin carboxylase (AccC) and two subunits each of ACCase subunit alpha (AccA) and ACCase subunit beta (AccD).

It localises to the cytoplasm. The catalysed reaction is N(6)-carboxybiotinyl-L-lysyl-[protein] + acetyl-CoA = N(6)-biotinyl-L-lysyl-[protein] + malonyl-CoA. It functions in the pathway lipid metabolism; malonyl-CoA biosynthesis; malonyl-CoA from acetyl-CoA: step 1/1. Its function is as follows. Component of the acetyl coenzyme A carboxylase (ACC) complex. First, biotin carboxylase catalyzes the carboxylation of biotin on its carrier protein (BCCP) and then the CO(2) group is transferred by the carboxyltransferase to acetyl-CoA to form malonyl-CoA. The polypeptide is Acetyl-coenzyme A carboxylase carboxyl transferase subunit alpha (Methylobacterium sp. (strain 4-46)).